Consider the following 203-residue polypeptide: Small ribosomal subunit protein uS4 (203 aa).

Positions 93-153 (RRLDNVVYRL…EKSKNLQQVK (61 aa)) constitute an S4 RNA-binding domain.

This sequence belongs to the universal ribosomal protein uS4 family. In terms of assembly, part of the 30S ribosomal subunit. Contacts protein S5. The interaction surface between S4 and S5 is involved in control of translational fidelity.

Functionally, one of the primary rRNA binding proteins, it binds directly to 16S rRNA where it nucleates assembly of the body of the 30S subunit. Its function is as follows. With S5 and S12 plays an important role in translational accuracy. The sequence is that of Small ribosomal subunit protein uS4 from Lactobacillus delbrueckii subsp. bulgaricus (strain ATCC 11842 / DSM 20081 / BCRC 10696 / JCM 1002 / NBRC 13953 / NCIMB 11778 / NCTC 12712 / WDCM 00102 / Lb 14).